The chain runs to 212 residues: Thymidylate kinase (212 aa).

7–14 (GIEGCGKS) lines the ATP pocket.

The protein belongs to the thymidylate kinase family.

The enzyme catalyses dTMP + ATP = dTDP + ADP. Functionally, phosphorylation of dTMP to form dTDP in both de novo and salvage pathways of dTTP synthesis. This is Thymidylate kinase from Trichlorobacter lovleyi (strain ATCC BAA-1151 / DSM 17278 / SZ) (Geobacter lovleyi).